We begin with the raw amino-acid sequence, 166 residues long: NAD(P)H-quinone oxidoreductase subunit I, chloroplastic (166 aa).

2 consecutive 4Fe-4S ferredoxin-type domains span residues 55–84 and 95–124; these read GRIH…VDWK and LNYS…MTEE. Residues cysteine 64, cysteine 67, cysteine 70, cysteine 74, cysteine 104, cysteine 107, cysteine 110, and cysteine 114 each coordinate [4Fe-4S] cluster.

It belongs to the complex I 23 kDa subunit family. In terms of assembly, NDH is composed of at least 16 different subunits, 5 of which are encoded in the nucleus. [4Fe-4S] cluster serves as cofactor.

It localises to the plastid. The protein localises to the chloroplast thylakoid membrane. The enzyme catalyses a plastoquinone + NADH + (n+1) H(+)(in) = a plastoquinol + NAD(+) + n H(+)(out). It catalyses the reaction a plastoquinone + NADPH + (n+1) H(+)(in) = a plastoquinol + NADP(+) + n H(+)(out). Functionally, NDH shuttles electrons from NAD(P)H:plastoquinone, via FMN and iron-sulfur (Fe-S) centers, to quinones in the photosynthetic chain and possibly in a chloroplast respiratory chain. The immediate electron acceptor for the enzyme in this species is believed to be plastoquinone. Couples the redox reaction to proton translocation, and thus conserves the redox energy in a proton gradient. The polypeptide is NAD(P)H-quinone oxidoreductase subunit I, chloroplastic (Palafoxia arida (Spanish needles)).